A 436-amino-acid polypeptide reads, in one-letter code: 3-ketoacyl-CoA thiolase (436 aa).

Residue Cys-99 is the Acyl-thioester intermediate of the active site. Active-site proton acceptor residues include His-392 and Cys-422.

It belongs to the thiolase-like superfamily. Thiolase family. As to quaternary structure, heterotetramer of two alpha chains (FadJ) and two beta chains (FadI).

Its subcellular location is the cytoplasm. The enzyme catalyses an acyl-CoA + acetyl-CoA = a 3-oxoacyl-CoA + CoA. The protein operates within lipid metabolism; fatty acid beta-oxidation. Its function is as follows. Catalyzes the final step of fatty acid oxidation in which acetyl-CoA is released and the CoA ester of a fatty acid two carbons shorter is formed. In Salmonella newport (strain SL254), this protein is 3-ketoacyl-CoA thiolase.